The following is a 181-amino-acid chain: NADH-quinone oxidoreductase subunit 2 (181 aa).

Positions 83, 87, 88, 124, and 128 each coordinate [2Fe-2S] cluster. Cysteines 144 and 172 form a disulfide.

Belongs to the complex I 24 kDa subunit family. NDH-1 is composed of 15 different subunits, Nqo1 to Nqo15. The complex has a L-shaped structure, with the hydrophobic arm (subunits Nqo7, Nqo8 and Nqo10 to Nqo14) embedded in the membrane and the hydrophilic peripheral arm (subunits Nqo1 to Nqo6, Nqo9 and Nqo15) protruding into the bacterial cytoplasm. The hydrophilic domain contains all the redox centers. [2Fe-2S] cluster serves as cofactor.

The protein localises to the cell membrane. It catalyses the reaction a quinone + NADH + 5 H(+)(in) = a quinol + NAD(+) + 4 H(+)(out). Functionally, NDH-1 shuttles electrons from NADH, via FMN and iron-sulfur (Fe-S) centers, to quinones in the respiratory chain. The immediate electron acceptor for the enzyme in this species is menaquinone. Couples the redox reaction to proton translocation (for every two electrons transferred, four hydrogen ions are translocated across the cytoplasmic membrane), and thus conserves the redox energy in a proton gradient required for the synthesis of ATP. This is NADH-quinone oxidoreductase subunit 2 (nqo2) from Thermus thermophilus (strain ATCC 27634 / DSM 579 / HB8).